We begin with the raw amino-acid sequence, 98 residues long: MTPTYMNIMLAFTISLLGMLIYRSHLMASLLCLEGMMMSLFIMTTLIALNTRSPLINIMPIILLVFAACEAAVGLALLVSISNTYGLDYIHNLNLLQC.

The next 3 helical transmembrane spans lie at 1–21 (MTPT…GMLI), 29–49 (SLLC…LIAL), and 61–81 (IILL…LVSI).

The protein belongs to the complex I subunit 4L family. In terms of assembly, core subunit of respiratory chain NADH dehydrogenase (Complex I) which is composed of 45 different subunits.

The protein resides in the mitochondrion inner membrane. The enzyme catalyses a ubiquinone + NADH + 5 H(+)(in) = a ubiquinol + NAD(+) + 4 H(+)(out). In terms of biological role, core subunit of the mitochondrial membrane respiratory chain NADH dehydrogenase (Complex I) which catalyzes electron transfer from NADH through the respiratory chain, using ubiquinone as an electron acceptor. Part of the enzyme membrane arm which is embedded in the lipid bilayer and involved in proton translocation. The sequence is that of NADH-ubiquinone oxidoreductase chain 4L (MT-ND4L) from Macaca maura (Moor macaque).